The following is a 365-amino-acid chain: 3-isopropylmalate dehydrogenase (365 aa).

Residue 78–89 (GPKWGTGKVRPE) participates in NAD(+) binding. Substrate contacts are provided by R96, R106, R135, and D224. D224, D249, and D253 together coordinate Mg(2+). 289-301 (GSAPDISGKGIVN) contacts NAD(+).

The protein belongs to the isocitrate and isopropylmalate dehydrogenases family. As to quaternary structure, homodimer. It depends on Mg(2+) as a cofactor. Mn(2+) serves as cofactor.

The protein resides in the cytoplasm. It carries out the reaction (2R,3S)-3-isopropylmalate + NAD(+) = 4-methyl-2-oxopentanoate + CO2 + NADH. The protein operates within amino-acid biosynthesis; L-leucine biosynthesis; L-leucine from 3-methyl-2-oxobutanoate: step 3/4. Functionally, catalyzes the oxidation of 3-carboxy-2-hydroxy-4-methylpentanoate (3-isopropylmalate) to 3-carboxy-4-methyl-2-oxopentanoate. The product decarboxylates to 4-methyl-2 oxopentanoate. The sequence is that of 3-isopropylmalate dehydrogenase (LEUC) from Zymoseptoria tritici (Speckled leaf blotch fungus).